Reading from the N-terminus, the 445-residue chain is Hydroxycinnamoyl-CoA:5-hydroxyanthranilate N-hydroxycinnamoyltransferase HHT4 (445 aa).

This sequence belongs to the plant acyltransferase family.

It carries out the reaction 5-hydroxyanthranilate + (E)-4-coumaroyl-CoA = avenanthramide A + CoA. The enzyme catalyses 5-hydroxyanthranilate + (E)-caffeoyl-CoA = avenanthramide C + CoA. Functionally, involved in the biosynthesis of avenanthramide phytoalexins, which are phenolic alkaloids found mainly in oats. Catalyzes the N-acylation of 5-hydroxyanthranilate with 4-coumaroyl-CoA or caffeoyl-CoA as acyl donors, forming avenanthramide A and avenanthramide C, respectively. Does not accept feruloyl-CoA as a substrate. The polypeptide is Hydroxycinnamoyl-CoA:5-hydroxyanthranilate N-hydroxycinnamoyltransferase HHT4 (Avena sativa (Oat)).